Consider the following 473-residue polypeptide: Siroheme synthase (473 aa).

The segment at methionine 1–leucine 203 is precorrin-2 dehydrogenase /sirohydrochlorin ferrochelatase. NAD(+) contacts are provided by residues aspartate 22–valine 23 and proline 43–lysine 44. Serine 128 is modified (phosphoserine). The uroporphyrinogen-III C-methyltransferase stretch occupies residues glycine 215–alanine 473. Position 224 (proline 224) interacts with S-adenosyl-L-methionine. Aspartate 247 functions as the Proton acceptor in the catalytic mechanism. Residue lysine 269 is the Proton donor of the active site. Residues glycine 300 to aspartate 302, isoleucine 305, threonine 330 to alanine 331, methionine 382, and glycine 411 each bind S-adenosyl-L-methionine.

It in the N-terminal section; belongs to the precorrin-2 dehydrogenase / sirohydrochlorin ferrochelatase family. The protein in the C-terminal section; belongs to the precorrin methyltransferase family.

The enzyme catalyses uroporphyrinogen III + 2 S-adenosyl-L-methionine = precorrin-2 + 2 S-adenosyl-L-homocysteine + H(+). It carries out the reaction precorrin-2 + NAD(+) = sirohydrochlorin + NADH + 2 H(+). It catalyses the reaction siroheme + 2 H(+) = sirohydrochlorin + Fe(2+). The protein operates within cofactor biosynthesis; adenosylcobalamin biosynthesis; precorrin-2 from uroporphyrinogen III: step 1/1. It functions in the pathway cofactor biosynthesis; adenosylcobalamin biosynthesis; sirohydrochlorin from precorrin-2: step 1/1. It participates in porphyrin-containing compound metabolism; siroheme biosynthesis; precorrin-2 from uroporphyrinogen III: step 1/1. Its pathway is porphyrin-containing compound metabolism; siroheme biosynthesis; siroheme from sirohydrochlorin: step 1/1. The protein operates within porphyrin-containing compound metabolism; siroheme biosynthesis; sirohydrochlorin from precorrin-2: step 1/1. Functionally, multifunctional enzyme that catalyzes the SAM-dependent methylations of uroporphyrinogen III at position C-2 and C-7 to form precorrin-2 via precorrin-1. Then it catalyzes the NAD-dependent ring dehydrogenation of precorrin-2 to yield sirohydrochlorin. Finally, it catalyzes the ferrochelation of sirohydrochlorin to yield siroheme. In Pseudoalteromonas translucida (strain TAC 125), this protein is Siroheme synthase.